We begin with the raw amino-acid sequence, 1466 residues long: Collagen alpha-1(III) chain (1466 aa).

An N-terminal signal peptide occupies residues 1-23 (MMSFVQKGSWLLLALLHPTIILA). Residues 24–153 (QQEAVEGGCS…CPTGPQNYSP (130 aa)) constitute a propeptide, N-terminal propeptide. Residues 30–89 (GGCSHLGQSYADRDVWKPEPCQICVCDSGSVLCDDIICDDQELDCPNPEIPFGECCAVCP) form the VWFC domain. A disordered region spans residues 95 to 1194 (PTRPPNGQGP…GPPGPPGAPG (1100 aa)). The segment covering 99–108 (PNGQGPQGPK) has biased composition (low complexity). Positions 146–155 (TGPQNYSPQY) are enriched in polar residues. A nonhelical region (N-terminal) region spans residues 149–167 (QNYSPQYDSYDVKSGVAVG). The segment at 168–1196 (GLAGYPGPAG…PGPPGAPGPC (1029 aa)) is triple-helical region. 17 positions are modified to 4-hydroxyproline: Pro173, Pro179, Pro182, Pro185, Pro191, Pro194, Pro197, Pro203, Pro206, Pro215, Pro218, Pro236, Pro239, Pro245, Pro248, Pro257, and Pro260. Residues 175 to 185 (PAGPPGPPGPP) are compositionally biased toward pro residues. Over residues 187 to 199 (TSGHPGSPGSPGY) the composition is skewed to low complexity. The segment covering 229 to 241 (KDGESGRPGRPGE) has biased composition (basic and acidic residues). Residues 251–260 (KGPAGIPGFP) are compositionally biased toward low complexity. Lys263 carries the post-translational modification 5-hydroxylysine; alternate. Lys263 carries O-linked (Gal...) hydroxylysine; alternate glycosylation. Basic and acidic residues predominate over residues 266–277 (RGFDGRNGEKGE). Residue Pro281 is modified to 4-hydroxyproline. Lys284 carries the 5-hydroxylysine modification. Pro290, Pro296, Pro305, Pro311, Pro314, Pro332, Pro335, Pro338, Pro344, Pro347, Pro359, Pro365, Pro371, Pro383, Pro386, Pro392, Pro404, Pro407, Pro416, Pro425, Pro434, Pro443, Pro455, Pro458, Pro470, Pro473, Pro479, Pro488, Pro500, Pro512, Pro524, Pro530, Pro533, Pro539, Pro542, Pro545, Pro551, Pro554, Pro563, Pro566, Pro575, Pro581, Pro590, Pro599, Pro602, Pro608, Pro620, Pro635, Pro644, Pro650, Pro656, Pro659, Pro661, Pro668, Pro671, Pro680, Pro686, Pro692, Pro701, Pro703, Pro713, Pro716, Pro722, Pro728, Pro737, Pro746, Pro749, Pro755, Pro770, Pro776, Pro785, Pro788, Pro797, Pro806, Pro812, Pro815, Pro821, Pro830, Pro839, Pro845, and Pro854 each carry 4-hydroxyproline. The segment covering 311-322 (PGLPGAAGARGN) has biased composition (low complexity). Residues 355–380 (PAGSPGSNGAPGQRGEPGPQGHAGAQ) are compositionally biased toward low complexity. The segment covering 390 to 399 (GSPGGKGEMG) has biased composition (gly residues). Low complexity predominate over residues 404–425 (PGAPGLMGARGPPGPAGANGAP). The segment covering 426-435 (GLRGGAGEPG) has biased composition (gly residues). The span at 478 to 523 (LPGAAGERGAPGFRGPAGPNGIPGEKGPAGERGAPGPAGPRGAAGE) shows a compositional bias: low complexity. Positions 528–549 (GVPGGPGMRGMPGSPGGPGSDG) are enriched in gly residues. Residues 642–651 (GLPGTGGPPG) show a composition bias toward gly residues. Positions 669–678 (GAPGGKGDAG) are enriched in gly residues. Residues 679–692 (APGERGPPGLAGAP) are compositionally biased toward low complexity. Over residues 693 to 711 (GLRGGAGPPGPEGGKGAAG) the composition is skewed to gly residues. Positions 729–738 (GERGGLGSPG) are enriched in gly residues. Residues 787–796 (LPGIAGPRGS) show a composition bias toward low complexity. The segment covering 823–835 (GKGERGAPGEKGE) has biased composition (basic and acidic residues). The segment covering 836-850 (GGPPGVAGPPGGSGP) has biased composition (gly residues). The residue at position 860 (Lys860) is a 5-hydroxylysine. A compositionally biased stretch (gly residues) spans 864 to 873 (GSPGGPGAAG). A 4-hydroxyproline mark is found at Pro866, Pro869, Pro875, Pro881, Pro884, Pro890, Pro892, Pro899, Pro905, Pro914, Pro917, Pro929, Pro935, Pro941, and Pro944. Over residues 890-907 (PGPPGPSGSPGKDGPPGP) the composition is skewed to pro residues. Low complexity predominate over residues 908 to 917 (AGNTGAPGSP). Positions 946–961 (PLGIAGITGARGLAGP) are enriched in low complexity. 4-hydroxyproline is present on residues Pro962, Pro965, and Pro971. Lys977 is subject to 5-hydroxylysine. Residues Pro983, Pro995, Pro1001, Pro1010, Pro1016, Pro1022, Pro1028, Pro1040, Pro1043, Pro1046, Pro1049, Pro1052, Pro1076, and Pro1085 each carry the 4-hydroxyproline modification. The segment covering 1046 to 1055 (PGHPGPPGPV) has biased composition (pro residues). Residues 1067–1085 (SGPAGPAGAPGPAGSRGAP) show a composition bias toward low complexity. The residue at position 1106 (Lys1106) is a 5-hydroxylysine. A 4-hydroxyproline mark is found at Pro1112, Pro1115, Pro1118, Pro1121, Pro1133, Pro1148, Pro1157, Pro1163, Pro1178, Pro1181, Pro1184, Pro1187, Pro1190, and Pro1193. A compositionally biased stretch (low complexity) spans 1123–1133 (PAGQQGAIGSP). A compositionally biased stretch (pro residues) spans 1181–1193 (PGQPGPPGPPGAP). The interval 1197–1205 (CGGVGAAAI) is nonhelical region (C-terminal). A propeptide spans 1222–1466 (DEPMDFKINT…GVDVGPVCFL (245 aa)) (C-terminal propeptide). Positions 1232–1466 (DEIMTSLKSV…GVDVGPVCFL (235 aa)) constitute a Fibrillar collagen NC1 domain. 3 disulfides stabilise this stretch: Cys1262–Cys1294, Cys1302–Cys1464, and Cys1372–Cys1417. Ca(2+) contacts are provided by Asp1280, Asn1282, Gln1283, Cys1285, and Asp1288.

This sequence belongs to the fibrillar collagen family. Trimers of identical alpha 1(III) chains. The chains are linked to each other by interchain disulfide bonds. Trimers are also cross-linked via hydroxylysines. Interacts with ADGRG1. In terms of processing, proline residues at the third position of the tripeptide repeating unit (G-X-Y) are hydroxylated in some or all of the chains. Post-translationally, O-linked glycan consists of a Glc-Gal disaccharide bound to the oxygen atom of a post-translationally added hydroxyl group.

It is found in the secreted. The protein resides in the extracellular space. It localises to the extracellular matrix. Its function is as follows. Collagen type III occurs in most soft connective tissues along with type I collagen. Involved in regulation of cortical development. Is the major ligand of ADGRG1 in the developing brain and binding to ADGRG1 inhibits neuronal migration and activates the RhoA pathway by coupling ADGRG1 to GNA13 and possibly GNA12. In Homo sapiens (Human), this protein is Collagen alpha-1(III) chain (COL3A1).